The primary structure comprises 218 residues: Serine/threonine-protein phosphatase 1 (218 aa).

Positions 24, 26, 53, and 79 each coordinate Mn(2+). His-80 acts as the Proton donor in catalysis. His-187 contacts Mn(2+).

Belongs to the PPP phosphatase family. PP-1 subfamily. It depends on Mn(2+) as a cofactor.

The catalysed reaction is O-phospho-L-seryl-[protein] + H2O = L-seryl-[protein] + phosphate. The enzyme catalyses O-phospho-L-threonyl-[protein] + H2O = L-threonyl-[protein] + phosphate. Plays a key role in signaling protein misfolding via the CpxR/CPXA transducing system. It also modulates the phosphorylated status of many phosphoproteins in E.coli, some of which acting as major chaperones. Has been shown, in vitro, to act on Ser, Thr and Tyr-phosphorylated substrates. The sequence is that of Serine/threonine-protein phosphatase 1 (pphA) from Escherichia coli (strain K12).